The chain runs to 222 residues: Sigma non-opioid intracellular receptor 1 (222 aa).

Residues M1–W7 are Lumenal-facing. A helical membrane pass occupies residues V8–L29. The Cytoplasmic portion of the chain corresponds to A30 to C222. The segment at S98 to L105 is important for ligand-binding. The tract at residues F176–C222 is C-terminal hydrophobic region.

It belongs to the ERG2 family. Homotrimer.

The protein resides in the nucleus inner membrane. It localises to the nucleus outer membrane. Its subcellular location is the nucleus envelope. The protein localises to the cytoplasmic vesicle. It is found in the endoplasmic reticulum membrane. The protein resides in the membrane. May function in lipid transport from the endoplasmic reticulum and be involved in a wide array of cellular functions probably through regulation of the biogenesis of lipid microdomains at the plasma membrane. May regulate calcium efflux at the endoplasmic reticulum. The chain is Sigma non-opioid intracellular receptor 1 (SIGMAR1) from Gallus gallus (Chicken).